The sequence spans 832 residues: Protein translocase subunit SecA (832 aa).

ATP contacts are provided by residues Gln-87, 105–109 (GEGKT), and Asp-512.

It belongs to the SecA family. In terms of assembly, monomer and homodimer. Part of the essential Sec protein translocation apparatus which comprises SecA, SecYEG and auxiliary proteins SecDF-YajC and YidC.

The protein resides in the cell membrane. It localises to the cytoplasm. It carries out the reaction ATP + H2O + cellular proteinSide 1 = ADP + phosphate + cellular proteinSide 2.. Functionally, part of the Sec protein translocase complex. Interacts with the SecYEG preprotein conducting channel. Has a central role in coupling the hydrolysis of ATP to the transfer of proteins into and across the cell membrane, serving as an ATP-driven molecular motor driving the stepwise translocation of polypeptide chains across the membrane. In Wigglesworthia glossinidia brevipalpis, this protein is Protein translocase subunit SecA.